The primary structure comprises 376 residues: Phospho-N-acetylmuramoyl-pentapeptide-transferase (376 aa).

A run of 10 helical transmembrane segments spans residues 28 to 48 (RTIM…PWFI), 76 to 96 (TMGG…WADL), 100 to 120 (FVLA…LDDF), 135 to 155 (YKLI…FLLA), 179 to 199 (YPIE…VVAT), 211 to 231 (GLAI…AYIV), 252 to 272 (AGEL…FLWY), 279 to 299 (VFMG…LAVF), 307 to 327 (IILG…VLSF), and 353 to 373 (KIIV…LASM).

The protein belongs to the glycosyltransferase 4 family. MraY subfamily. Requires Mg(2+) as cofactor.

The protein resides in the cell inner membrane. It carries out the reaction UDP-N-acetyl-alpha-D-muramoyl-L-alanyl-gamma-D-glutamyl-meso-2,6-diaminopimeloyl-D-alanyl-D-alanine + di-trans,octa-cis-undecaprenyl phosphate = di-trans,octa-cis-undecaprenyl diphospho-N-acetyl-alpha-D-muramoyl-L-alanyl-D-glutamyl-meso-2,6-diaminopimeloyl-D-alanyl-D-alanine + UMP. Its pathway is cell wall biogenesis; peptidoglycan biosynthesis. Its function is as follows. Catalyzes the initial step of the lipid cycle reactions in the biosynthesis of the cell wall peptidoglycan: transfers peptidoglycan precursor phospho-MurNAc-pentapeptide from UDP-MurNAc-pentapeptide onto the lipid carrier undecaprenyl phosphate, yielding undecaprenyl-pyrophosphoryl-MurNAc-pentapeptide, known as lipid I. The polypeptide is Phospho-N-acetylmuramoyl-pentapeptide-transferase (Sorangium cellulosum (strain So ce56) (Polyangium cellulosum (strain So ce56))).